A 149-amino-acid chain; its full sequence is MIALLQRVAHASVVVDGATVGAIDAGLMVLLCAERGDTEKEADALLAKLLSYRVFSDAAGKMNLSVVDTAGGVLLVPQFTLAADTRSGTRPSFTPAAAPDVARALFNYFVMQARSRHADIATGEFGADMKVSLTNDGPVTFWLQVKPVV.

The short motif at 137–138 (GP) is the Gly-cisPro motif, important for rejection of L-amino acids element.

Belongs to the DTD family. Homodimer.

It localises to the cytoplasm. It carries out the reaction glycyl-tRNA(Ala) + H2O = tRNA(Ala) + glycine + H(+). The enzyme catalyses a D-aminoacyl-tRNA + H2O = a tRNA + a D-alpha-amino acid + H(+). An aminoacyl-tRNA editing enzyme that deacylates mischarged D-aminoacyl-tRNAs. Also deacylates mischarged glycyl-tRNA(Ala), protecting cells against glycine mischarging by AlaRS. Acts via tRNA-based rather than protein-based catalysis; rejects L-amino acids rather than detecting D-amino acids in the active site. By recycling D-aminoacyl-tRNA to D-amino acids and free tRNA molecules, this enzyme counteracts the toxicity associated with the formation of D-aminoacyl-tRNA entities in vivo and helps enforce protein L-homochirality. The chain is D-aminoacyl-tRNA deacylase from Janthinobacterium sp. (strain Marseille) (Minibacterium massiliensis).